Here is a 146-residue protein sequence, read N- to C-terminus: Hemoglobin subunit beta (146 aa).

Val1 bears the N-acetylvaline mark. A Globin domain is found at 2–146 (HLSGEEKAAV…VANALAHKYH (145 aa)). Phosphothreonine is present on Thr12. The residue at position 44 (Ser44) is a Phosphoserine. Lys59 is subject to N6-acetyllysine. Heme b is bound at residue His63. An N6-acetyllysine modification is found at Lys82. A heme b-binding site is contributed by His92. Cys93 carries the S-nitrosocysteine modification. Lys144 is modified (N6-acetyllysine).

Belongs to the globin family. Heterotetramer of two alpha chains and two beta chains. In terms of tissue distribution, red blood cells.

Functionally, involved in oxygen transport from the lung to the various peripheral tissues. The sequence is that of Hemoglobin subunit beta (HBB) from Tupaia glis (Common tree shrew).